Reading from the N-terminus, the 261-residue chain is tRNA U34 carboxymethyltransferase (261 aa).

Carboxy-S-adenosyl-L-methionine contacts are provided by residues lysine 25, tryptophan 39, lysine 44, glycine 63, 114-115 (VE), tyrosine 135, and arginine 250.

The protein belongs to the class I-like SAM-binding methyltransferase superfamily. CmoB family. Homotetramer.

It catalyses the reaction carboxy-S-adenosyl-L-methionine + 5-hydroxyuridine(34) in tRNA = 5-carboxymethoxyuridine(34) in tRNA + S-adenosyl-L-homocysteine + H(+). In terms of biological role, catalyzes carboxymethyl transfer from carboxy-S-adenosyl-L-methionine (Cx-SAM) to 5-hydroxyuridine (ho5U) to form 5-carboxymethoxyuridine (cmo5U) at position 34 in tRNAs. This Helicobacter pylori (strain ATCC 700392 / 26695) (Campylobacter pylori) protein is tRNA U34 carboxymethyltransferase.